Reading from the N-terminus, the 71-residue chain is Protein SlyX homolog (71 aa).

Positions 52–71 (RLDQAESSAGAPANERPPHY) are disordered.

Belongs to the SlyX family.

This is Protein SlyX homolog from Rhodopseudomonas palustris (strain ATCC BAA-98 / CGA009).